A 172-amino-acid polypeptide reads, in one-letter code: Lipoprotein signal peptidase (172 aa).

4 consecutive transmembrane segments (helical) span residues 12 to 32, 43 to 63, 77 to 97, and 102 to 122; these read TSAANGSLAPWLGVALIVILF, VFAYGVAHEVTSFFNLILVYN, WQRWAFTALGVVAALVICYLL, and GQKMFCTALALILGGALGNVI. Active-site residues include aspartate 132 and aspartate 150. A helical membrane pass occupies residues 142–162; sequence HWPAFNLADSAITVGAVLLVL.

This sequence belongs to the peptidase A8 family.

It localises to the cell inner membrane. The catalysed reaction is Release of signal peptides from bacterial membrane prolipoproteins. Hydrolyzes -Xaa-Yaa-Zaa-|-(S,diacylglyceryl)Cys-, in which Xaa is hydrophobic (preferably Leu), and Yaa (Ala or Ser) and Zaa (Gly or Ala) have small, neutral side chains.. It participates in protein modification; lipoprotein biosynthesis (signal peptide cleavage). In terms of biological role, this protein specifically catalyzes the removal of signal peptides from prolipoproteins. This Paraburkholderia phytofirmans (strain DSM 17436 / LMG 22146 / PsJN) (Burkholderia phytofirmans) protein is Lipoprotein signal peptidase.